Reading from the N-terminus, the 470-residue chain is Poly(A) polymerase catalytic subunit (470 aa).

Residues aspartate 192 and aspartate 194 contribute to the active site.

It belongs to the poxviridae poly(A) polymerase catalytic subunit family. Heterodimer of a large (catalytic) subunit and a small (regulatory) subunit.

The catalysed reaction is RNA(n) + ATP = RNA(n)-3'-adenine ribonucleotide + diphosphate. Functionally, polymerase that creates the 3'-poly(A) tail of mRNA's. This Oryctolagus cuniculus (Rabbit) protein is Poly(A) polymerase catalytic subunit (PAPL).